The sequence spans 482 residues: Bifunctional protein GlmU (482 aa).

Residues 1–238 (MSAIRPAAVV…HREIAGINNR (238 aa)) form a pyrophosphorylase region. Residues 12–15 (LAAG), K26, Q79, and 84–85 (GT) each bind UDP-N-acetyl-alpha-D-glucosamine. D110 serves as a coordination point for Mg(2+). Residues G147, E163, N178, and N236 each coordinate UDP-N-acetyl-alpha-D-glucosamine. Position 236 (N236) interacts with Mg(2+). The tract at residues 239–259 (VQLAEARRILNDRLLTGAMLA) is linker. Residues 260–482 (GVTVVDPATT…AVSREADGED (223 aa)) are N-acetyltransferase. Positions 341 and 359 each coordinate UDP-N-acetyl-alpha-D-glucosamine. The Proton acceptor role is filled by H371. 2 residues coordinate UDP-N-acetyl-alpha-D-glucosamine: Y374 and N385. Residues A388, 394 to 395 (NY), S413, A431, and R448 each bind acetyl-CoA. The disordered stretch occupies residues 460–482 (RKRPGSAAAKAAEAVSREADGED). A compositionally biased stretch (low complexity) spans 464-473 (GSAAAKAAEA).

This sequence in the N-terminal section; belongs to the N-acetylglucosamine-1-phosphate uridyltransferase family. It in the C-terminal section; belongs to the transferase hexapeptide repeat family. As to quaternary structure, homotrimer. Mg(2+) is required as a cofactor.

The protein resides in the cytoplasm. It carries out the reaction alpha-D-glucosamine 1-phosphate + acetyl-CoA = N-acetyl-alpha-D-glucosamine 1-phosphate + CoA + H(+). The enzyme catalyses N-acetyl-alpha-D-glucosamine 1-phosphate + UTP + H(+) = UDP-N-acetyl-alpha-D-glucosamine + diphosphate. It participates in nucleotide-sugar biosynthesis; UDP-N-acetyl-alpha-D-glucosamine biosynthesis; N-acetyl-alpha-D-glucosamine 1-phosphate from alpha-D-glucosamine 6-phosphate (route II): step 2/2. It functions in the pathway nucleotide-sugar biosynthesis; UDP-N-acetyl-alpha-D-glucosamine biosynthesis; UDP-N-acetyl-alpha-D-glucosamine from N-acetyl-alpha-D-glucosamine 1-phosphate: step 1/1. The protein operates within bacterial outer membrane biogenesis; LPS lipid A biosynthesis. Functionally, catalyzes the last two sequential reactions in the de novo biosynthetic pathway for UDP-N-acetylglucosamine (UDP-GlcNAc). The C-terminal domain catalyzes the transfer of acetyl group from acetyl coenzyme A to glucosamine-1-phosphate (GlcN-1-P) to produce N-acetylglucosamine-1-phosphate (GlcNAc-1-P), which is converted into UDP-GlcNAc by the transfer of uridine 5-monophosphate (from uridine 5-triphosphate), a reaction catalyzed by the N-terminal domain. This is Bifunctional protein GlmU from Streptomyces coelicolor (strain ATCC BAA-471 / A3(2) / M145).